A 33-amino-acid chain; its full sequence is Protein YdgV (33 aa).

This Escherichia coli (strain K12) protein is Protein YdgV.